A 323-amino-acid chain; its full sequence is Methenyltetrahydromethanopterin cyclohydrolase (323 aa).

This sequence belongs to the MCH family.

The protein localises to the cytoplasm. The enzyme catalyses 5,10-methenyl-5,6,7,8-tetrahydromethanopterin + H2O = N(5)-formyl-5,6,7,8-tetrahydromethanopterin + H(+). It participates in one-carbon metabolism; methanogenesis from CO(2); 5,10-methenyl-5,6,7,8-tetrahydromethanopterin from CO(2): step 3/3. In terms of biological role, catalyzes the reversible interconversion of 5-formyl-H(4)MPT to methenyl-H(4)MPT(+). This chain is Methenyltetrahydromethanopterin cyclohydrolase, found in Methanococcus maripaludis (strain DSM 14266 / JCM 13030 / NBRC 101832 / S2 / LL).